We begin with the raw amino-acid sequence, 107 residues long: Large ribosomal subunit protein bL21 (107 aa).

It belongs to the bacterial ribosomal protein bL21 family. In terms of assembly, part of the 50S ribosomal subunit. Contacts protein L20.

This protein binds to 23S rRNA in the presence of protein L20. The sequence is that of Large ribosomal subunit protein bL21 from Buchnera aphidicola subsp. Schizaphis graminum (strain Sg).